The sequence spans 185 residues: MIDEALFDAEEKMEKAVSVAREDLSMIRTGRANPGMFSRLVIDYYGSATPITQLASINVPEARLVVIKPYDAIQLHAIETAIRNSDLGVNPSNDGTLIRVAVPQLTEERRRELVKQAKCKGEDAKVSVRNIRRKVMEELHRIRKDGEAGEDEVSRAEKDLDKTTHQYVIQIDELVKHKEGELLEV.

It belongs to the RRF family.

The protein resides in the cytoplasm. In terms of biological role, responsible for the release of ribosomes from messenger RNA at the termination of protein biosynthesis. May increase the efficiency of translation by recycling ribosomes from one round of translation to another. This is Ribosome-recycling factor from Mycobacterium leprae (strain Br4923).